We begin with the raw amino-acid sequence, 796 residues long: Bud site selection protein 27 (796 aa).

A coiled-coil region spans residues 81-121 (KEEAITFVDDKLKLMEDAIEQFNLKIEEAKKTLDNLNHMED). Residues 152 to 168 (VISSSVTPTTKQPSQSN) show a composition bias toward polar residues. Disordered stretches follow at residues 152–197 (VISS…EENL), 300–344 (LRAQ…QVGF), 421–458 (EGEA…TTRS), 535–624 (EKEP…AKTG), and 752–796 (ATAS…DSKP). Composition is skewed to basic and acidic residues over residues 169–197 (SKKE…EENL) and 306–318 (SQDH…DVNK). Positions 427-441 (SNRRTRVSRFRKDRA) are enriched in basic residues. The span at 535 to 550 (EKEPEINSKSEFETPF) shows a compositional bias: basic and acidic residues. A compositionally biased stretch (basic residues) spans 551 to 568 (KKKKLKSLQKPRSSKSMK). The segment covering 579-589 (ISDDDYDDDDD) has biased composition (acidic residues). Ser580 is subject to Phosphoserine. Positions 601 to 610 (NNTDEQDKFP) are enriched in basic and acidic residues.

Belongs to the prefoldin subunit alpha family.

Its subcellular location is the cytoplasm. Its function is as follows. Involved in gene expression controlled by TOR kinase and nutrient signaling. May also be involved in positioning the proximal bud pole signal. This chain is Bud site selection protein 27 (BUD27), found in Saccharomyces cerevisiae (strain ATCC 204508 / S288c) (Baker's yeast).